The following is a 493-amino-acid chain: Dipeptide permease D (493 aa).

Residues 1–13 (MNKHASQPRAIYY) lie on the Cytoplasmic side of the membrane. The helical transmembrane segment at 14–34 (VVALQIWEYFSFYGMRALLIL) threads the bilayer. Topologically, residues 35–48 (YLTNQLKYNDTHAY) are periplasmic. A helical membrane pass occupies residues 49 to 69 (ELFSAYCSLVYVTPILGGFLA). Over 70-77 (DKVLGNRM) the chain is Cytoplasmic. Residues 78–98 (AVMLGALLMAIGHVVLGASEI) form a helical membrane-spanning segment. The Periplasmic segment spans residues 99–100 (HP). A helical membrane pass occupies residues 101–121 (SFLYLSLAIIVCGYGLFKSNV). The Cytoplasmic portion of the chain corresponds to 122–137 (SCLLGELYEPTDPRRD). A helical membrane pass occupies residues 138-158 (GGFSLMYAAGNVGSIIAPIAC). At 159–166 (GYAQEEYS) the chain is on the periplasmic side. The helical transmembrane segment at 167–187 (WAMGFGLAAVGMIAGLVIFLC) threads the bilayer. Residues 188 to 211 (GNRHFTHTRGVNKKVLRATNFLLP) are Cytoplasmic-facing. A helical membrane pass occupies residues 212-232 (NWGWLLVLLVATPALITILFW). The Periplasmic segment spans residues 233-234 (KE). Residues 235–255 (WSVYALIVATIIGLGVLAKIY) traverse the membrane as a helical segment. The Cytoplasmic segment spans residues 256–266 (RKAENQKQRKE). Residues 267–287 (LGLIVTLTFFSMLFWAFAQQG) form a helical membrane-spanning segment. Topologically, residues 288–311 (GSSISLYIDRFVNRDMFGYTVPTA) are periplasmic. Residues 312–332 (MFQSINAFAVMLCGVFLAWVV) traverse the membrane as a helical segment. Over 333-343 (KESVAGNRTVR) the chain is Cytoplasmic. The chain crosses the membrane as a helical span at residues 344-364 (IWGKFALGLGLMSAGFCILTL). The Periplasmic segment spans residues 365-378 (SARWSAMYGHSSLP). The chain crosses the membrane as a helical span at residues 379–399 (LMVLGLAVMGFAELFIDPVAM). At 400–412 (SQITRIEIPGVTG) the chain is on the cytoplasmic side. A helical membrane pass occupies residues 413-433 (VLTGIYMLLSGAIANYLAGVI). At 434-461 (ADQTSQASFDASGAINYSINAYIEVFDQ) the chain is on the periplasmic side. Residues 462–482 (ITWGALACVGLVLMIWLYQAL) traverse the membrane as a helical segment. Residues 483–493 (KFRNRALALES) are Cytoplasmic-facing.

It belongs to the major facilitator superfamily. Proton-dependent oligopeptide transporter (POT/PTR) (TC 2.A.17) family. DtpD subfamily.

Its subcellular location is the cell inner membrane. In terms of biological role, probable proton-dependent permease that transports dipeptides. In Escherichia coli (strain K12), this protein is Dipeptide permease D (dtpD).